Here is a 270-residue protein sequence, read N- to C-terminus: Centromere protein Q (270 aa).

The interval 1-59 (MSGKANTSKKKSQRVKRNVKQRADKEDEELDSPENKVGNRAKRNRSHAGHLSSKEQTKC) is disordered. 2 stretches are compositionally biased toward basic residues: residues 7 to 20 (TSKK…RNVK) and 39 to 48 (NRAKRNRSHA). Residue Ser52 is modified to Phosphoserine. The stretch at 143–205 (LKVEREQERA…EEEMKEVFHI (63 aa)) forms a coiled coil.

The protein belongs to the CENP-Q/OKP1 family. As to quaternary structure, component of the CENPA-CAD complex, composed of CENPI, CENPK, CENPL, CENPO, CENPP, CENPQ, CENPR and CENPS. The CENPA-CAD complex interacts with the CENPA-NAC complex, at least composed of CENPA, CENPC, CENPH, CENPM, CENPN, CENPT and CENPU. Post-translationally, phosphorylation at Ser-52 is essential for CENPE recruitment to kinetochores and orderly chromosome congression.

The protein localises to the nucleus. It localises to the chromosome. The protein resides in the centromere. In terms of biological role, component of the CENPA-CAD (nucleosome distal) complex, a complex recruited to centromeres which is involved in assembly of kinetochore proteins, mitotic progression and chromosome segregation. May be involved in incorporation of newly synthesized CENPA into centromeres via its interaction with the CENPA-NAC complex. Plays an important role in chromosome congression and in the recruitment of CENP-O complex (which comprises CENPO, CENPP, CENPQ and CENPU), CENPE and PLK1 to the kinetochores. This is Centromere protein Q (Cenpq) from Rattus norvegicus (Rat).